A 65-amino-acid polypeptide reads, in one-letter code: Disintegrin VLO4 (65 aa).

The 65-residue stretch at 1-65 (MNSGNPCCDP…PDCPRNPWKG (65 aa)) folds into the Disintegrin domain. Disulfide bonds link C7–C30, C21–C27, C26–C51, and C39–C58. The Cell attachment site signature appears at 43–45 (RGD).

It belongs to the disintegrin family. Dimeric disintegrin subfamily. In terms of assembly, homodimer; disulfide-linked. Expressed by the venom gland.

Its subcellular location is the secreted. In terms of biological role, poor inhibitor of platelet aggregation. The disintegrin inhibits the adhesion of cells expressing the RGD-dependent integrin alpha-5/beta-1 (ITGA5/ITGB1) to immobilized fibronectin. Inhibition on alpha-2b/beta-3 (ITGA2B/ITGB3) is low. The chain is Disintegrin VLO4 from Macrovipera lebetina obtusa (Levant blunt-nosed viper).